An 862-amino-acid chain; its full sequence is Valine--tRNA ligase (862 aa).

The short motif at 47–57 (PTASGSLHIGH) is the 'HIGH' region element. The segment at 110 to 130 (EPGLTPPFEGGDNKSSKAADQ) is disordered. The segment covering 120 to 129 (GDNKSSKAAD) has biased composition (basic and acidic residues). The 'KMSKS' region signature appears at 584 to 588 (KMSKS). Lys587 provides a ligand contact to ATP.

This sequence belongs to the class-I aminoacyl-tRNA synthetase family. ValS type 2 subfamily. As to quaternary structure, monomer.

Its subcellular location is the cytoplasm. It carries out the reaction tRNA(Val) + L-valine + ATP = L-valyl-tRNA(Val) + AMP + diphosphate. Catalyzes the attachment of valine to tRNA(Val). As ValRS can inadvertently accommodate and process structurally similar amino acids such as threonine, to avoid such errors, it has a 'posttransfer' editing activity that hydrolyzes mischarged Thr-tRNA(Val) in a tRNA-dependent manner. This Leifsonia xyli subsp. xyli (strain CTCB07) protein is Valine--tRNA ligase.